The sequence spans 932 residues: F-box protein COS111 (932 aa).

Residues 29-63 form a disordered region; that stretch reads VSAKHRPSSTGVYGHDASTVDHASRSNNNLNLTRS. Low complexity predominate over residues 53-63; that stretch reads RSNNNLNLTRS. The region spanning 146–193 is the F-box domain; sequence RKEISDLPDEVLRNILSNVKDDQRTLVNCLYVNKAFYNATKPTLYERP. Residues 346-358 are compositionally biased toward polar residues; it reads LSEGKSSDNGNNG. Disordered regions lie at residues 346-369, 389-450, 470-500, and 863-893; these read LSEG…SVSS, TLSG…SNWF, ISSK…TEPF, and SVLP…SNDP. Low complexity-rich tracts occupy residues 395–431 and 438–447; these read NNSS…SQID and TSSKSTSSTS. A compositionally biased stretch (polar residues) spans 876–890; it reads DDTNNGENTIAQPFS.

Functionally, F-box protein probably involved in ubiquitin conjugation pathway. In Candida glabrata (strain ATCC 2001 / BCRC 20586 / JCM 3761 / NBRC 0622 / NRRL Y-65 / CBS 138) (Yeast), this protein is F-box protein COS111 (COS111).